Consider the following 705-residue polypeptide: Ribonuclease R (705 aa).

The RNB domain occupies 240 to 567 (RRDLREQLCF…VHRLLKKALR (328 aa)). Residues 615 to 696 (GEEFIGIITG…ERARVEFELI (82 aa)) enclose the S1 motif domain.

Belongs to the RNR ribonuclease family. RNase R subfamily.

It is found in the cytoplasm. It carries out the reaction Exonucleolytic cleavage in the 3'- to 5'-direction to yield nucleoside 5'-phosphates.. In terms of biological role, 3'-5' exoribonuclease that releases 5'-nucleoside monophosphates and is involved in maturation of structured RNAs. The sequence is that of Ribonuclease R from Aquifex aeolicus (strain VF5).